A 553-amino-acid chain; its full sequence is Terpene synthase 16 (553 aa).

Positions 303, 307, and 457 each coordinate Mg(2+). A DDXXD motif motif is present at residues 303-307 (DDTYD).

It belongs to the terpene synthase family. Tpsa subfamily. Requires Mg(2+) as cofactor. The cofactor is Mn(2+). As to expression, expressed in leaves, trichomes and flowers.

The protein operates within secondary metabolite biosynthesis; terpenoid biosynthesis. Sesquiterpene synthase involved in the biosynthesis of volatile compounds. No activity detected with geranyl diphosphate (GPP) and farnesyl diphosphate (FPP) as substrates. The chain is Terpene synthase 16 from Solanum lycopersicum (Tomato).